Consider the following 648-residue polypeptide: 1-deoxy-D-xylulose-5-phosphate synthase (648 aa).

Residues H74 and 115 to 117 (GHA) each bind thiamine diphosphate. D146 is a Mg(2+) binding site. Thiamine diphosphate-binding positions include 147-148 (GA), N176, Y292, and E375. Residue N176 participates in Mg(2+) binding.

Belongs to the transketolase family. DXPS subfamily. In terms of assembly, homodimer. Mg(2+) serves as cofactor. Thiamine diphosphate is required as a cofactor.

It carries out the reaction D-glyceraldehyde 3-phosphate + pyruvate + H(+) = 1-deoxy-D-xylulose 5-phosphate + CO2. The protein operates within metabolic intermediate biosynthesis; 1-deoxy-D-xylulose 5-phosphate biosynthesis; 1-deoxy-D-xylulose 5-phosphate from D-glyceraldehyde 3-phosphate and pyruvate: step 1/1. Functionally, catalyzes the acyloin condensation reaction between C atoms 2 and 3 of pyruvate and glyceraldehyde 3-phosphate to yield 1-deoxy-D-xylulose-5-phosphate (DXP). The sequence is that of 1-deoxy-D-xylulose-5-phosphate synthase from Synechococcus sp. (strain JA-2-3B'a(2-13)) (Cyanobacteria bacterium Yellowstone B-Prime).